The following is a 258-amino-acid chain: Acyl-[acyl-carrier-protein]--UDP-N-acetylglucosamine O-acyltransferase (258 aa).

Belongs to the transferase hexapeptide repeat family. LpxA subfamily. Homotrimer.

The protein resides in the cytoplasm. The enzyme catalyses a (3R)-hydroxyacyl-[ACP] + UDP-N-acetyl-alpha-D-glucosamine = a UDP-3-O-[(3R)-3-hydroxyacyl]-N-acetyl-alpha-D-glucosamine + holo-[ACP]. The protein operates within glycolipid biosynthesis; lipid IV(A) biosynthesis; lipid IV(A) from (3R)-3-hydroxytetradecanoyl-[acyl-carrier-protein] and UDP-N-acetyl-alpha-D-glucosamine: step 1/6. Functionally, involved in the biosynthesis of lipid A, a phosphorylated glycolipid that anchors the lipopolysaccharide to the outer membrane of the cell. The sequence is that of Acyl-[acyl-carrier-protein]--UDP-N-acetylglucosamine O-acyltransferase from Pseudomonas fluorescens (strain SBW25).